Here is a 179-residue protein sequence, read N- to C-terminus: Large ribosomal subunit protein bL9 (179 aa).

The disordered stretch occupies residues 156 to 179 (PEGAPVPVAEEPAAEAEQAEVAAE). Positions 157 to 166 (EGAPVPVAEE) are enriched in low complexity. The span at 167 to 179 (PAAEAEQAEVAAE) shows a compositional bias: acidic residues.

This sequence belongs to the bacterial ribosomal protein bL9 family.

In terms of biological role, binds to the 23S rRNA. The protein is Large ribosomal subunit protein bL9 of Porphyromonas gingivalis (strain ATCC 33277 / DSM 20709 / CIP 103683 / JCM 12257 / NCTC 11834 / 2561).